Reading from the N-terminus, the 549-residue chain is Glucose-6-phosphate isomerase (549 aa).

Residue glutamate 353 is the Proton donor of the active site. Active-site residues include histidine 384 and lysine 513.

Belongs to the GPI family.

Its subcellular location is the cytoplasm. The enzyme catalyses alpha-D-glucose 6-phosphate = beta-D-fructose 6-phosphate. It participates in carbohydrate biosynthesis; gluconeogenesis. The protein operates within carbohydrate degradation; glycolysis; D-glyceraldehyde 3-phosphate and glycerone phosphate from D-glucose: step 2/4. Functionally, catalyzes the reversible isomerization of glucose-6-phosphate to fructose-6-phosphate. This is Glucose-6-phosphate isomerase from Brucella suis (strain ATCC 23445 / NCTC 10510).